Here is a 157-residue protein sequence, read N- to C-terminus: Transcriptional repressor NrdR (157 aa).

A zinc finger lies at 3 to 34 (CPFCRHPDSRVIDSRTSDDGLSIRRRRQCPEC). Positions 46 to 136 (LSVIKRSGVV…VYQAFDSLED (91 aa)) constitute an ATP-cone domain.

Belongs to the NrdR family. Requires Zn(2+) as cofactor.

Functionally, negatively regulates transcription of bacterial ribonucleotide reductase nrd genes and operons by binding to NrdR-boxes. The protein is Transcriptional repressor NrdR of Leifsonia xyli subsp. xyli (strain CTCB07).